Reading from the N-terminus, the 1179-residue chain is ATP-dependent helicase/deoxyribonuclease subunit B (1179 aa).

The protein belongs to the helicase family. AddB/RexB type 2 subfamily. In terms of assembly, heterodimer of AddA and RexB. It depends on Mg(2+) as a cofactor.

Its function is as follows. The heterodimer acts as both an ATP-dependent DNA helicase and an ATP-dependent, dual-direction single-stranded exonuclease. Recognizes the chi site generating a DNA molecule suitable for the initiation of homologous recombination. This subunit has 5' -&gt; 3' nuclease activity but not helicase activity. This chain is ATP-dependent helicase/deoxyribonuclease subunit B, found in Lacticaseibacillus casei (strain BL23) (Lactobacillus casei).